The following is a 130-amino-acid chain: Histone H2A.2 (130 aa).

Lys4 and Lys6 each carry N6-acetyllysine. Gln104 is subject to N5-methylglutamine. Lys125 is covalently cross-linked (Glycyl lysine isopeptide (Lys-Gly) (interchain with G-Cter in SUMO)). Phosphoserine is present on Ser127. The [ST]-Q motif motif lies at 127–128 (SQ).

The protein belongs to the histone H2A family. As to quaternary structure, the nucleosome is a histone octamer containing two molecules each of H2A, H2B, H3 and H4 assembled in one H3-H4 heterotetramer and two H2A-H2B heterodimers. The octamer wraps approximately 147 bp of DNA. Phosphorylated to form H2AS128ph (gamma-H2A) in response to DNA double-strand breaks (DSBs) generated by exogenous genotoxic agents and by stalled replication forks. Phosphorylation is dependent on the DNA damage checkpoint kinases MEC1/ATR and TEL1/ATM, spreads on either side of a detected DSB site and may mark the surrounding chromatin for recruitment of proteins required for DNA damage signaling and repair. Gamma-H2A is removed from the DNA prior to the strand invasion-primer extension step of the repair process and subsequently dephosphorylated. Dephosphorylation is necessary for efficient recovery from the DNA damage checkpoint. Post-translationally, acetylated by ESA1 to form H2AK4ac and H2AK7ac.

Its subcellular location is the nucleus. The protein resides in the chromosome. In terms of biological role, core component of nucleosome which plays a central role in DNA double strand break (DSB) repair. Nucleosomes wrap and compact DNA into chromatin, limiting DNA accessibility to the cellular machineries which require DNA as a template. Histones thereby play a central role in transcription regulation, DNA repair, DNA replication and chromosomal stability. DNA accessibility is regulated via a complex set of post-translational modifications of histones, also called histone code, and nucleosome remodeling. This chain is Histone H2A.2 (HTA2), found in Meyerozyma guilliermondii (strain ATCC 6260 / CBS 566 / DSM 6381 / JCM 1539 / NBRC 10279 / NRRL Y-324) (Yeast).